Consider the following 290-residue polypeptide: Forkhead box protein O3B (290 aa).

2 disordered regions span residues 1–30 (METDLAEMPEKGVLSSQDSPHFQEKSTEEG) and 44–239 (AAAA…SSRR). Low complexity-rich tracts occupy residues 44–59 (AAAAAAPGSRSLRGVH) and 75–91 (RTPAAAGRAAKMAEAPA). Thr-117 carries the post-translational modification Phosphothreonine; by PKB/AKT1. Residues 142–153 (IPEEEDDEDDED) show a composition bias toward acidic residues. A DNA-binding region (fork-head) is located at residues 242–290 (WGNLSYADLITRAIESSPDRRLTLSQIYEWMVSCVPYFKDKGNSNSSAG).

The protein localises to the cytoplasm. It localises to the cytosol. Functionally, transcription factor. The chain is Forkhead box protein O3B from Homo sapiens (Human).